The sequence spans 390 residues: S-adenosylmethionine synthase 1 (390 aa).

Glu-9 contacts Mg(2+). ATP is bound at residue His-15. Glu-43 serves as a coordination point for K(+). 2 residues coordinate L-methionine: Glu-56 and Gln-99. ATP-binding positions include 167–169 (DGK), 235–238 (SGRF), Asp-246, 252–253 (RK), Ala-269, Lys-273, and Lys-277. Asp-246 provides a ligand contact to L-methionine. Position 277 (Lys-277) interacts with L-methionine.

It belongs to the AdoMet synthase family. In terms of assembly, homotetramer. It depends on Mn(2+) as a cofactor. Mg(2+) is required as a cofactor. Requires Co(2+) as cofactor. K(+) serves as cofactor.

The protein resides in the cytoplasm. It carries out the reaction L-methionine + ATP + H2O = S-adenosyl-L-methionine + phosphate + diphosphate. It participates in amino-acid biosynthesis; S-adenosyl-L-methionine biosynthesis; S-adenosyl-L-methionine from L-methionine: step 1/1. In terms of biological role, catalyzes the formation of S-adenosylmethionine from methionine and ATP. The reaction comprises two steps that are both catalyzed by the same enzyme: formation of S-adenosylmethionine (AdoMet) and triphosphate, and subsequent hydrolysis of the triphosphate. The protein is S-adenosylmethionine synthase 1 (SAM1) of Petunia hybrida (Petunia).